Consider the following 222-residue polypeptide: UPF0502 protein PBPRB0676 (222 aa).

The protein belongs to the UPF0502 family.

This is UPF0502 protein PBPRB0676 from Photobacterium profundum (strain SS9).